A 439-amino-acid polypeptide reads, in one-letter code: Ribosomal protein uS12 methylthiotransferase RimO (439 aa).

An MTTase N-terminal domain is found at 3-115; the sequence is NKLHIVSLGC…IDELLVEKKS (113 aa). Cys-12, Cys-46, Cys-78, Cys-146, Cys-150, and Cys-153 together coordinate [4Fe-4S] cluster. The Radical SAM core domain maps to 132–361; the sequence is TGSTYHAYIK…GKIAADVMQA (230 aa).

This sequence belongs to the methylthiotransferase family. RimO subfamily. [4Fe-4S] cluster serves as cofactor.

The protein resides in the cytoplasm. The catalysed reaction is L-aspartate(89)-[ribosomal protein uS12]-hydrogen + (sulfur carrier)-SH + AH2 + 2 S-adenosyl-L-methionine = 3-methylsulfanyl-L-aspartate(89)-[ribosomal protein uS12]-hydrogen + (sulfur carrier)-H + 5'-deoxyadenosine + L-methionine + A + S-adenosyl-L-homocysteine + 2 H(+). Functionally, catalyzes the methylthiolation of an aspartic acid residue of ribosomal protein uS12. This Sulfurimonas denitrificans (strain ATCC 33889 / DSM 1251) (Thiomicrospira denitrificans (strain ATCC 33889 / DSM 1251)) protein is Ribosomal protein uS12 methylthiotransferase RimO.